Reading from the N-terminus, the 350-residue chain is Arabinogalactan endo-beta-1,4-galactanase A (350 aa).

Residues 1–17 form the signal peptide; the sequence is MILSSLLPLSLVTLTSA. Asn129 is a glycosylation site (N-linked (GlcNAc...) asparagine). The Proton donor role is filled by Glu153. Glu263 functions as the Nucleophile in the catalytic mechanism.

The protein belongs to the glycosyl hydrolase 53 family.

The protein localises to the secreted. The enzyme catalyses The enzyme specifically hydrolyzes (1-&gt;4)-beta-D-galactosidic linkages in type I arabinogalactans.. In terms of biological role, endogalactanase involved in the degradation of plant cell wall polysaccharides, and more particularly of hairy regions of pectin. The chain is Arabinogalactan endo-beta-1,4-galactanase A (galA) from Emericella nidulans (strain FGSC A4 / ATCC 38163 / CBS 112.46 / NRRL 194 / M139) (Aspergillus nidulans).